Consider the following 458-residue polypeptide: Fasciclin-like arabinogalactan protein 17 (458 aa).

Residues 1–30 (MDRRIYGGSAVIHLFLFFSVLIFSAASALS) form the signal peptide. The 142-residue stretch at 43 to 184 (NSNSVLVALL…GLIHGIERLL (142 aa)) folds into the FAS1 1 domain. Asn-80 is a glycosylation site (N-linked (GlcNAc...) asparagine). A disordered region spans residues 207 to 262 (PEGAPEVDPRTNRLKKPAAPVPAGSPPALPIQSAMAPGPSLAPAPAPGPGGKQHHF). The span at 225–235 (APVPAGSPPAL) shows a compositional bias: pro residues. In terms of domain architecture, FAS1 2 spans 268–411 (VKDFIHTLLH…ISVQGIDGVL (144 aa)). An N-linked (GlcNAc...) asparagine glycan is attached at Asn-290.

This sequence belongs to the fasciclin-like AGP family.

It is found in the secreted. In terms of biological role, may be a cell surface adhesion protein. The protein is Fasciclin-like arabinogalactan protein 17 (FLA17) of Arabidopsis thaliana (Mouse-ear cress).